The primary structure comprises 591 residues: L-fucose isomerase (591 aa).

Catalysis depends on proton acceptor residues Glu337 and Asp361. Mn(2+) contacts are provided by Glu337, Asp361, and His528.

This sequence belongs to the L-fucose isomerase family. Homohexamer. Mn(2+) is required as a cofactor.

It localises to the cytoplasm. It carries out the reaction L-fucose = L-fuculose. Its pathway is carbohydrate degradation; L-fucose degradation; L-lactaldehyde and glycerone phosphate from L-fucose: step 1/3. In terms of biological role, converts the aldose L-fucose into the corresponding ketose L-fuculose. This chain is L-fucose isomerase, found in Salmonella typhi.